Consider the following 463-residue polypeptide: Spermidine/putrescine import ATP-binding protein PotA (463 aa).

In terms of domain architecture, ABC transporter spans 10–240; sequence IEVSHVSKFF…PINSFVADFI (231 aa). Residue 42–49 coordinates ATP; sequence GPSGCGKT.

Belongs to the ABC transporter superfamily. Spermidine/putrescine importer (TC 3.A.1.11.1) family. As to quaternary structure, the complex is composed of two ATP-binding proteins (PotA), two transmembrane proteins (PotB and PotC) and a solute-binding protein (PotD).

Its subcellular location is the cell inner membrane. It carries out the reaction ATP + H2O + polyamine-[polyamine-binding protein]Side 1 = ADP + phosphate + polyamineSide 2 + [polyamine-binding protein]Side 1.. Part of the ABC transporter complex PotABCD involved in spermidine/putrescine import. Responsible for energy coupling to the transport system. This Bacteroides thetaiotaomicron (strain ATCC 29148 / DSM 2079 / JCM 5827 / CCUG 10774 / NCTC 10582 / VPI-5482 / E50) protein is Spermidine/putrescine import ATP-binding protein PotA.